Reading from the N-terminus, the 734-residue chain is Photosystem I P700 chlorophyll a apoprotein A2 (734 aa).

The next 8 membrane-spanning stretches (helical) occupy residues 46–69 (IFAS…FHVA), 135–158 (LYTG…LHLQ), 175–199 (LNHH…HVAI), 273–291 (IAHH…GHMY), 330–353 (IHFQ…QHMY), 369–395 (AALY…IFFI), 417–439 (AIIS…LYVH), and 517–535 (FLVH…LILV). The [4Fe-4S] cluster site is built by Cys-559 and Cys-568. 2 consecutive transmembrane segments (helical) span residues 575 to 596 (AFYL…YWHW) and 643 to 665 (LSVW…MFLI). Chlorophyll a-binding residues include His-654, Met-662, and Tyr-670. Trp-671 contacts phylloquinone. The chain crosses the membrane as a helical span at residues 707–727 (LVGLAHFSVGYIFTYAAFLIA).

The protein belongs to the PsaA/PsaB family. In terms of assembly, the PsaA/B heterodimer binds the P700 chlorophyll special pair and subsequent electron acceptors. PSI consists of a core antenna complex that captures photons, and an electron transfer chain that converts photonic excitation into a charge separation. The eukaryotic PSI reaction center is composed of at least 11 subunits. P700 is a chlorophyll a/chlorophyll a' dimer, A0 is one or more chlorophyll a, A1 is one or both phylloquinones and FX is a shared 4Fe-4S iron-sulfur center. is required as a cofactor.

It is found in the plastid. The protein resides in the chloroplast thylakoid membrane. It catalyses the reaction reduced [plastocyanin] + hnu + oxidized [2Fe-2S]-[ferredoxin] = oxidized [plastocyanin] + reduced [2Fe-2S]-[ferredoxin]. In terms of biological role, psaA and PsaB bind P700, the primary electron donor of photosystem I (PSI), as well as the electron acceptors A0, A1 and FX. PSI is a plastocyanin-ferredoxin oxidoreductase, converting photonic excitation into a charge separation, which transfers an electron from the donor P700 chlorophyll pair to the spectroscopically characterized acceptors A0, A1, FX, FA and FB in turn. Oxidized P700 is reduced on the lumenal side of the thylakoid membrane by plastocyanin. The sequence is that of Photosystem I P700 chlorophyll a apoprotein A2 from Oryza sativa (Rice).